Here is a 338-residue protein sequence, read N- to C-terminus: Ketol-acid reductoisomerase (NADP(+)) (338 aa).

In terms of domain architecture, KARI N-terminal Rossmann spans 1–181 (MKVFYDKDAD…GGGRAGIIET (181 aa)). Residues 24–27 (YGSQ), arginine 47, and serine 52 each bind NADP(+). The active site involves histidine 107. NADP(+) is bound at residue glycine 133. A KARI C-terminal knotted domain is found at 182–327 (NFREETETDL…SKLRAMMPWI (146 aa)). Residues aspartate 190, glutamate 194, glutamate 226, and glutamate 230 each coordinate Mg(2+). Position 251 (serine 251) interacts with substrate.

Belongs to the ketol-acid reductoisomerase family. Mg(2+) is required as a cofactor.

The enzyme catalyses (2R)-2,3-dihydroxy-3-methylbutanoate + NADP(+) = (2S)-2-acetolactate + NADPH + H(+). It catalyses the reaction (2R,3R)-2,3-dihydroxy-3-methylpentanoate + NADP(+) = (S)-2-ethyl-2-hydroxy-3-oxobutanoate + NADPH + H(+). The protein operates within amino-acid biosynthesis; L-isoleucine biosynthesis; L-isoleucine from 2-oxobutanoate: step 2/4. Its pathway is amino-acid biosynthesis; L-valine biosynthesis; L-valine from pyruvate: step 2/4. Functionally, involved in the biosynthesis of branched-chain amino acids (BCAA). Catalyzes an alkyl-migration followed by a ketol-acid reduction of (S)-2-acetolactate (S2AL) to yield (R)-2,3-dihydroxy-isovalerate. In the isomerase reaction, S2AL is rearranged via a Mg-dependent methyl migration to produce 3-hydroxy-3-methyl-2-ketobutyrate (HMKB). In the reductase reaction, this 2-ketoacid undergoes a metal-dependent reduction by NADPH to yield (R)-2,3-dihydroxy-isovalerate. The sequence is that of Ketol-acid reductoisomerase (NADP(+)) from Paraburkholderia xenovorans (strain LB400).